Consider the following 353-residue polypeptide: UDP-galactose transporter (353 aa).

6 helical membrane-spanning segments follow: residues 147–167, 184–204, 215–235, 254–274, 279–299, and 302–322; these read LGPM…IVQL, VTGF…GVYF, LWVR…FTIL, IVWL…LCVA, IMKN…SVYL, and FKIS…TFLY. A disordered region spans residues 325-353; that stretch reads PESKPSPSRGTYIPMTTQDAAAKDVDHKH. Over residues 329–343 the composition is skewed to polar residues; the sequence is PSPSRGTYIPMTTQD.

This sequence belongs to the nucleotide-sugar transporter family. SLC35A subfamily.

The protein resides in the golgi apparatus membrane. Essential for the transport of UDP-galactose into the lumen of Golgi apparatus. In Schizosaccharomyces pombe (strain 972 / ATCC 24843) (Fission yeast), this protein is UDP-galactose transporter (gms1).